We begin with the raw amino-acid sequence, 511 residues long: Transcription factor bHLH28 (511 aa).

Residues 339–388 form the bHLH domain; the sequence is DKPLNHVEAERMRREKLNHRFYALRAVVPNVSKMDKTSLLEDAVCYINEL.

Homodimer.

It is found in the nucleus. This Arabidopsis thaliana (Mouse-ear cress) protein is Transcription factor bHLH28 (BHLH28).